Consider the following 1077-residue polypeptide: Eukaryotic translation initiation factor 2-alpha kinase pek-1 (1077 aa).

The signal sequence occupies residues 1-23; the sequence is MSVYYIVLAGFLLFMALVPFNAG. The Lumenal portion of the chain corresponds to 24 to 453; that stretch reads QQYIDDDIEV…ITLMQTIFSY (430 aa). An N-linked (GlcNAc...) asparagine glycan is attached at asparagine 206. Residues 454–474 traverse the membrane as a helical segment; it reads IFNPTAVVSFLAGLIGVTVAV. At 475-1077 the chain is on the cytoplasmic side; it reads VYNKIAKSSP…HEVATHKFLQ (603 aa). The Protein kinase domain maps to 604 to 1076; it reads FEVKKVIGHG…AHEVATHKFL (473 aa). Residues 610–618 and lysine 633 contribute to the ATP site; that span reads IGHGGFGVV. The disordered stretch occupies residues 727-834; it reads MPPVVGNTTD…FVDGSDDVDN (108 aa). Residues 732–746 show a composition bias toward polar residues; that stretch reads GNTTDAENSWSTSAK. A compositionally biased stretch (basic and acidic residues) spans 766 to 778; the sequence is GSDRTTAELKEES. Over residues 783–796 the composition is skewed to acidic residues; that stretch reads ESDEESDTTEDSSS. Residues 797-808 are compositionally biased toward low complexity; it reads SDESPSSSSGSS. Aspartate 933 serves as the catalytic Proton acceptor.

Belongs to the protein kinase superfamily. Ser/Thr protein kinase family. GCN2 subfamily. In terms of assembly, forms dimers with HSPA5/BIP in resting cells. Oligomerizes in ER-stressed cells. Post-translationally, autophosphorylated. In terms of processing, N-glycosylated. As to expression, expressed in intestinal cells.

The protein resides in the endoplasmic reticulum membrane. The catalysed reaction is L-seryl-[protein] + ATP = O-phospho-L-seryl-[protein] + ADP + H(+). It carries out the reaction L-threonyl-[protein] + ATP = O-phospho-L-threonyl-[protein] + ADP + H(+). Its activity is regulated as follows. Perturbation in protein folding in the endoplasmic reticulum (ER) promotes reversible dissociation from HSPA5/BIP and oligomerization, resulting in transautophosphorylation and kinase activity induction. Its function is as follows. Phosphorylates the alpha subunit of eukaryotic translation-initiation factor 2 (eIF2alpha), leading to its inactivation and thus to a rapid reduction of translational initiation and repression of global protein synthesis. May phosphorylate eIF2alpha during hypoxia. Proposed to have a role in alleviating endoplasmic reticulum stress. The sequence is that of Eukaryotic translation initiation factor 2-alpha kinase pek-1 (pek-1) from Caenorhabditis elegans.